The sequence spans 467 residues: 3-isopropylmalate dehydratase large subunit (467 aa).

[4Fe-4S] cluster is bound by residues cysteine 348, cysteine 409, and cysteine 412. Residues 423 to 448 form a disordered region; it reads NERSISTSNRNFEGRQGKGSRTHLAS.

This sequence belongs to the aconitase/IPM isomerase family. LeuC type 1 subfamily. As to quaternary structure, heterodimer of LeuC and LeuD. [4Fe-4S] cluster is required as a cofactor.

The enzyme catalyses (2R,3S)-3-isopropylmalate = (2S)-2-isopropylmalate. The protein operates within amino-acid biosynthesis; L-leucine biosynthesis; L-leucine from 3-methyl-2-oxobutanoate: step 2/4. In terms of biological role, catalyzes the isomerization between 2-isopropylmalate and 3-isopropylmalate, via the formation of 2-isopropylmaleate. This chain is 3-isopropylmalate dehydratase large subunit, found in Bifidobacterium longum (strain DJO10A).